The primary structure comprises 534 residues: Replication factor C large subunit (534 aa).

45 to 52 (GPPGIGKT) serves as a coordination point for ATP. Residues 444-463 (KNKKEIKVKTKKDTVEDSSK) show a composition bias toward basic and acidic residues. The disordered stretch occupies residues 444 to 534 (KNKKEIKVKT…KSRQTTLFDF (91 aa)). Over residues 488-510 (SSNSTTKNKTESPKNSSKTSSKT) the composition is skewed to low complexity. The segment covering 517–527 (TSKKNNKKKSR) has biased composition (basic residues).

This sequence belongs to the activator 1 small subunits family. RfcL subfamily. As to quaternary structure, heteromultimer composed of small subunits (RfcS) and large subunits (RfcL).

Its function is as follows. Part of the RFC clamp loader complex which loads the PCNA sliding clamp onto DNA. The polypeptide is Replication factor C large subunit (Methanosphaera stadtmanae (strain ATCC 43021 / DSM 3091 / JCM 11832 / MCB-3)).